The chain runs to 595 residues: GPI mannosyltransferase 3 (595 aa).

10 consecutive transmembrane segments (helical) span residues 58–78, 85–105, 128–148, 185–207, 212–232, 235–255, 260–280, 289–309, 319–339, and 413–433; these read YAFP…GVAT, LAHA…GVAA, GPRV…VLLV, FFAT…LYHW, GLDV…FACL, PTNV…LVRS, LLLT…CANI, GVLL…LAAF, LLQS…GALL, and VQSL…VLNT.

The protein belongs to the glycosyltransferase 22 family. PIGB subfamily.

It is found in the endoplasmic reticulum membrane. It functions in the pathway glycolipid biosynthesis; glycosylphosphatidylinositol-anchor biosynthesis. In terms of biological role, mannosyltransferase involved in glycosylphosphatidylinositol-anchor biosynthesis. Transfers the third mannose to Man2-GlcN-acyl-PI during GPI precursor assembly. The polypeptide is GPI mannosyltransferase 3 (GPI10) (Eremothecium gossypii (strain ATCC 10895 / CBS 109.51 / FGSC 9923 / NRRL Y-1056) (Yeast)).